The chain runs to 180 residues: GTP cyclohydrolase 1 (180 aa).

Zn(2+) is bound by residues Cys71, His74, and Cys142.

The protein belongs to the GTP cyclohydrolase I family. As to quaternary structure, toroid-shaped homodecamer, composed of two pentamers of five dimers.

It carries out the reaction GTP + H2O = 7,8-dihydroneopterin 3'-triphosphate + formate + H(+). It participates in cofactor biosynthesis; 7,8-dihydroneopterin triphosphate biosynthesis; 7,8-dihydroneopterin triphosphate from GTP: step 1/1. The chain is GTP cyclohydrolase 1 from Helicobacter pylori (strain HPAG1).